A 160-amino-acid polypeptide reads, in one-letter code: Cytochrome b6-f complex subunit 4 (160 aa).

The next 3 membrane-spanning stretches (helical) occupy residues 36 to 56 (LLYVFPIVIMGSFAAIVALAV), 95 to 115 (LLGVLAMGSVPVGLILVPFIE), and 131 to 151 (TVFLVGTLVTVWLGIGAALPL).

This sequence belongs to the cytochrome b family. PetD subfamily. As to quaternary structure, the 4 large subunits of the cytochrome b6-f complex are cytochrome b6, subunit IV (17 kDa polypeptide, PetD), cytochrome f and the Rieske protein, while the 4 small subunits are PetG, PetL, PetM and PetN. The complex functions as a dimer.

The protein resides in the cellular thylakoid membrane. Component of the cytochrome b6-f complex, which mediates electron transfer between photosystem II (PSII) and photosystem I (PSI), cyclic electron flow around PSI, and state transitions. In Nostoc punctiforme (strain ATCC 29133 / PCC 73102), this protein is Cytochrome b6-f complex subunit 4.